The primary structure comprises 129 residues: Integration host factor subunit alpha (129 aa).

Residues 87–129 (SALNGEAPPEDHAEIDAREEAAADAAEARGEDFDEEGMEDMEG) are disordered. The span at 95 to 117 (PEDHAEIDAREEAAADAAEARGE) shows a compositional bias: basic and acidic residues. The span at 118–129 (DFDEEGMEDMEG) shows a compositional bias: acidic residues.

The protein belongs to the bacterial histone-like protein family. Heterodimer of an alpha and a beta chain.

This protein is one of the two subunits of integration host factor, a specific DNA-binding protein that functions in genetic recombination as well as in transcriptional and translational control. It is necessary for normal cell growth and the production of carotenoids in response to light. The sequence is that of Integration host factor subunit alpha (ihfA) from Myxococcus xanthus.